A 208-amino-acid polypeptide reads, in one-letter code: Probable GTP-binding protein EngB (208 aa).

In terms of domain architecture, EngB-type G spans 22–195 (GLPEIALAGR…WHSIEEIFIA (174 aa)). GTP contacts are provided by residues 30 to 37 (GRSNVGKS), 57 to 61 (GKTRT), 75 to 78 (DLPG), 142 to 145 (TKSD), and 174 to 176 (ISS). Residues serine 37 and threonine 59 each coordinate Mg(2+).

Belongs to the TRAFAC class TrmE-Era-EngA-EngB-Septin-like GTPase superfamily. EngB GTPase family. It depends on Mg(2+) as a cofactor.

Its function is as follows. Necessary for normal cell division and for the maintenance of normal septation. The chain is Probable GTP-binding protein EngB from Alkaliphilus oremlandii (strain OhILAs) (Clostridium oremlandii (strain OhILAs)).